The following is a 220-amino-acid chain: Deoxyribose-phosphate aldolase (220 aa).

Aspartate 89 acts as the Proton donor/acceptor in catalysis. Lysine 151 acts as the Schiff-base intermediate with acetaldehyde in catalysis. The Proton donor/acceptor role is filled by lysine 180.

The protein belongs to the DeoC/FbaB aldolase family. DeoC type 1 subfamily.

Its subcellular location is the cytoplasm. It carries out the reaction 2-deoxy-D-ribose 5-phosphate = D-glyceraldehyde 3-phosphate + acetaldehyde. It functions in the pathway carbohydrate degradation; 2-deoxy-D-ribose 1-phosphate degradation; D-glyceraldehyde 3-phosphate and acetaldehyde from 2-deoxy-alpha-D-ribose 1-phosphate: step 2/2. In terms of biological role, catalyzes a reversible aldol reaction between acetaldehyde and D-glyceraldehyde 3-phosphate to generate 2-deoxy-D-ribose 5-phosphate. In Streptococcus suis (strain 98HAH33), this protein is Deoxyribose-phosphate aldolase.